Here is a 191-residue protein sequence, read N- to C-terminus: Orotate phosphoribosyltransferase (191 aa).

114–122 (EDVVTTGKS) contacts 5-phospho-alpha-D-ribose 1-diphosphate. Residues Thr-118 and Arg-146 each coordinate orotate.

The protein belongs to the purine/pyrimidine phosphoribosyltransferase family. PyrE subfamily. Homodimer. Requires Mg(2+) as cofactor.

The enzyme catalyses orotidine 5'-phosphate + diphosphate = orotate + 5-phospho-alpha-D-ribose 1-diphosphate. The protein operates within pyrimidine metabolism; UMP biosynthesis via de novo pathway; UMP from orotate: step 1/2. Catalyzes the transfer of a ribosyl phosphate group from 5-phosphoribose 1-diphosphate to orotate, leading to the formation of orotidine monophosphate (OMP). In Clostridium botulinum (strain Loch Maree / Type A3), this protein is Orotate phosphoribosyltransferase.